Here is a 456-residue protein sequence, read N- to C-terminus: Solute carrier family 38 member 6 (456 aa).

Position 1 is an N-acetylmethionine (Met-1). Ser-4 and Ser-7 each carry phosphoserine. 5 consecutive transmembrane segments (helical) span residues 42–62 (SPGV…MGSG), 85–105 (VALL…QTAV), 111–131 (LGLF…IIIQ), 170–190 (LLII…KIGF), and 191–211 (LGYT…VVII). Residues Cys-218 and Cys-238 are joined by a disulfide bond. Residue Asn-233 is glycosylated (N-linked (GlcNAc...) asparagine). Residues 250 to 270 (AYALPTMAFSFLCHTSILPIY) form a helical membrane-spanning segment. Asn-283 is a glycosylation site (N-linked (GlcNAc...) asparagine). Transmembrane regions (helical) follow at residues 288–308 (AIAL…LTFY), 327–347 (VVVM…VPLI), 371–391 (FLIT…VPDI), 394–414 (VFGV…PGLF), and 431–451 (AFVL…LIIF).

Belongs to the amino acid/polyamine transporter 2 family.

Its subcellular location is the cell membrane. The protein resides in the synapse. The enzyme catalyses L-glutamine(out) = L-glutamine(in). The catalysed reaction is L-glutamate(out) = L-glutamate(in). In terms of biological role, amino acid transporter with an apparent selectivity for L-glutamine and L-glutamate. May facilitate glutamine uptake in excitatory neurons. The transport mechanism remains to be elucidated. This chain is Solute carrier family 38 member 6, found in Homo sapiens (Human).